Consider the following 92-residue polypeptide: Phosphoribosyl-ATP pyrophosphatase (92 aa).

It belongs to the PRA-PH family.

Its subcellular location is the cytoplasm. It catalyses the reaction 1-(5-phospho-beta-D-ribosyl)-ATP + H2O = 1-(5-phospho-beta-D-ribosyl)-5'-AMP + diphosphate + H(+). The protein operates within amino-acid biosynthesis; L-histidine biosynthesis; L-histidine from 5-phospho-alpha-D-ribose 1-diphosphate: step 2/9. The sequence is that of Phosphoribosyl-ATP pyrophosphatase from Leptospira biflexa serovar Patoc (strain Patoc 1 / ATCC 23582 / Paris).